The sequence spans 356 residues: Tyrosine recombinase XerS (356 aa).

The 106-residue stretch at 16-121 folds into the Core-binding (CB) domain; sequence VMPPYVLEYY…ALSSLYKYLT (106 aa). The 186-residue stretch at 169–354 folds into the Tyr recombinase domain; that stretch reads GFLDYIDSEY…INEEQKNALD (186 aa). Catalysis depends on residues Arg-210, Lys-234, His-306, Arg-309, and His-332. The active-site O-(3'-phospho-DNA)-tyrosine intermediate is Tyr-341.

It belongs to the 'phage' integrase family. XerS subfamily.

It is found in the cytoplasm. With respect to regulation, ftsK is required for recombination. Functionally, site-specific tyrosine recombinase, which acts by catalyzing the cutting and rejoining of the recombining DNA molecules. Essential to convert dimers of the bacterial chromosome into monomers to permit their segregation at cell division. This chain is Tyrosine recombinase XerS, found in Lactococcus lactis subsp. cremoris (strain SK11).